A 267-amino-acid polypeptide reads, in one-letter code: MRLIPLKNDEQVAKWSAQHIVDRINAFNPTEDHPFVLGLPTGGTPLKTYRELIKLYQAGKVSFKHVVTFNMDEYVGLPKEHPQSYHSFMYNNFFNHVDIPEKNINILDGNTPDHDAECRRYEEKIKSYGKINLFMGGVGVDGHIAFNEPASSLSSRTRIKTLTPDTLIANSRFFNNDVSQVPKYALTIGVATLLDAEEVMLLITGHQKALALQACVEGAVNHLWTVSALQLHRHSIVVCDEPATQELKVKTVKYFTELEAYAIHSVI.

Asp-72 (proton acceptor; for enolization step) is an active-site residue. The For ring-opening step role is filled by Asp-141. The active-site Proton acceptor; for ring-opening step is the His-143. The For ring-opening step role is filled by Glu-148.

It belongs to the glucosamine/galactosamine-6-phosphate isomerase family. NagB subfamily. As to quaternary structure, homohexamer.

The enzyme catalyses alpha-D-glucosamine 6-phosphate + H2O = beta-D-fructose 6-phosphate + NH4(+). Its pathway is amino-sugar metabolism; N-acetylneuraminate degradation; D-fructose 6-phosphate from N-acetylneuraminate: step 5/5. Its activity is regulated as follows. Allosterically activated by N-acetylglucosamine 6-phosphate (GlcNAc6P). Functionally, catalyzes the reversible isomerization-deamination of glucosamine 6-phosphate (GlcN6P) to form fructose 6-phosphate (Fru6P) and ammonium ion. The sequence is that of Glucosamine-6-phosphate deaminase from Mannheimia succiniciproducens (strain KCTC 0769BP / MBEL55E).